We begin with the raw amino-acid sequence, 114 residues long: Large ribosomal subunit protein bL20c (114 aa).

This sequence belongs to the bacterial ribosomal protein bL20 family.

The protein localises to the plastid. The protein resides in the chloroplast. In terms of biological role, binds directly to 23S ribosomal RNA and is necessary for the in vitro assembly process of the 50S ribosomal subunit. It is not involved in the protein synthesizing functions of that subunit. In Tetradesmus obliquus (Green alga), this protein is Large ribosomal subunit protein bL20c.